The chain runs to 346 residues: MLKVAINGFGRIGRNVLRAVYESGKHQQIKVVAVNELAQPEAMAHLLQYDTSHGRFGKRISHDQEHLYVHHDACPQGKGEFDSIRILHLSEINLLPWRDLEVDLVLDCTGVFGCQADGLEHIKAGAKKVLFSHPGASDLDNTIIYGVNHETLKAEHNVVSNGSCTTNCIVPIIKVLDEAFGIESGTITTIHSSMNDQQVIDAYHSDLRRTRAASQSIIPVDTKLHKGIERIFPKFSNKFEAISVRVPTVNVTAMDLSVTINTNVKVNDVNQTIVNASQCTLRGIVDYTEAPLVSIDFNHDPHSAIVDGSQTRVSNGHLVKMLVWCDNEWGFANRMLDTALAMQAAK.

Residue 11 to 12 (RI) coordinates NAD(+). Substrate-binding positions include 163–165 (SCT), arginine 209, 222–223 (TK), and arginine 245. Cysteine 164 (nucleophile) is an active-site residue. Position 327 (asparagine 327) interacts with NAD(+).

Belongs to the glyceraldehyde-3-phosphate dehydrogenase family. Epd subfamily. Homotetramer.

The protein resides in the cytoplasm. It catalyses the reaction D-erythrose 4-phosphate + NAD(+) + H2O = 4-phospho-D-erythronate + NADH + 2 H(+). The protein operates within cofactor biosynthesis; pyridoxine 5'-phosphate biosynthesis; pyridoxine 5'-phosphate from D-erythrose 4-phosphate: step 1/5. In terms of biological role, catalyzes the NAD-dependent conversion of D-erythrose 4-phosphate to 4-phosphoerythronate. The protein is D-erythrose-4-phosphate dehydrogenase of Vibrio vulnificus (strain YJ016).